Consider the following 782-residue polypeptide: Lysosome membrane protein 2-C (782 aa).

Residues 1–7 (MVANNKG) are Cytoplasmic-facing. Residues 8-28 (LLIAGLLLSVIGAALFVISLA) traverse the membrane as a helical segment. The Lumenal portion of the chain corresponds to 29 to 739 (LLPSVLNVAT…QQFKQIQTVK (711 aa)). N-linked (GlcNAc...) asparagine glycosylation is found at Asn-77, Asn-105, Asn-191, Asn-219, Asn-234, Asn-243, Asn-281, Asn-368, Asn-387, Asn-401, Asn-427, Asn-432, Asn-451, Asn-465, Asn-501, Asn-536, Asn-540, Asn-595, Asn-605, Asn-613, Asn-646, and Asn-692. A helical transmembrane segment spans residues 740 to 760 (IAPVVVVSIFGGILLIAGLVM). The Cytoplasmic portion of the chain corresponds to 761–782 (AINGFRKTFYNNNQYNGYNIIN). The Tyrosine-type lysosomal sorting signal signature appears at 777-781 (GYNII).

The protein belongs to the CD36 family. Post-translationally, heavily glycosylated.

The protein resides in the lysosome membrane. Functionally, may act as a lysosomal receptor. May be involved role in macropinocytosis and fluid phase exocytosis. The chain is Lysosome membrane protein 2-C (lmpC) from Dictyostelium discoideum (Social amoeba).